We begin with the raw amino-acid sequence, 367 residues long: Alanine racemase (367 aa).

Residue K35 is the Proton acceptor; specific for D-alanine of the active site. N6-(pyridoxal phosphate)lysine is present on K35. Residue R130 coordinates substrate. The active-site Proton acceptor; specific for L-alanine is Y258. M306 serves as a coordination point for substrate.

Belongs to the alanine racemase family. It depends on pyridoxal 5'-phosphate as a cofactor.

It carries out the reaction L-alanine = D-alanine. The protein operates within amino-acid biosynthesis; D-alanine biosynthesis; D-alanine from L-alanine: step 1/1. In terms of biological role, catalyzes the interconversion of L-alanine and D-alanine. May also act on other amino acids. The protein is Alanine racemase (alr) of Acinetobacter baumannii (strain SDF).